A 328-amino-acid polypeptide reads, in one-letter code: V-set and immunoglobulin domain-containing protein 2 (328 aa).

The N-terminal stretch at 1–24 (MAWPLVGAFLCGHLLGFVCLSGLA) is a signal peptide. One can recognise an Ig-like V-type domain in the interval 25–138 (VEVTVPTEPL…DFYTNGLGLI (114 aa)). Residues 25 to 244 (VEVTVPTEPL…VTDSSEGRVA (220 aa)) are Extracellular-facing. C46 and C122 are oxidised to a cystine. N-linked (GlcNAc...) asparagine glycosylation is found at N139, N207, and N232. The region spanning 145-234 (PPSHPLCSQS…GSASCELNLS (90 aa)) is the Ig-like C2-type domain. Cysteines 167 and 218 form a disulfide. Residues 245 to 265 (GTLIGVLLGVLLLSVAAFCLI) form a helical membrane-spanning segment. At 266–328 (RFQKERKKEP…TTKSKLSMVV (63 aa)) the chain is on the cytoplasmic side.

Expressed in the stomach, colon and prostate.

Its subcellular location is the membrane. The chain is V-set and immunoglobulin domain-containing protein 2 (Vsig2) from Mus musculus (Mouse).